Reading from the N-terminus, the 153-residue chain is 6,7-dimethyl-8-ribityllumazine synthase (153 aa).

5-amino-6-(D-ribitylamino)uracil is bound by residues phenylalanine 21, 55-57, and 79-81; these read AFE and TVI. 84–85 lines the (2S)-2-hydroxy-3-oxobutyl phosphate pocket; that stretch reads AT. Histidine 87 serves as the catalytic Proton donor. Position 112 (phenylalanine 112) interacts with 5-amino-6-(D-ribitylamino)uracil. Residue arginine 126 coordinates (2S)-2-hydroxy-3-oxobutyl phosphate.

Belongs to the DMRL synthase family. In terms of assembly, forms an icosahedral capsid composed of 60 subunits, arranged as a dodecamer of pentamers.

The catalysed reaction is (2S)-2-hydroxy-3-oxobutyl phosphate + 5-amino-6-(D-ribitylamino)uracil = 6,7-dimethyl-8-(1-D-ribityl)lumazine + phosphate + 2 H2O + H(+). Its pathway is cofactor biosynthesis; riboflavin biosynthesis; riboflavin from 2-hydroxy-3-oxobutyl phosphate and 5-amino-6-(D-ribitylamino)uracil: step 1/2. Catalyzes the formation of 6,7-dimethyl-8-ribityllumazine by condensation of 5-amino-6-(D-ribitylamino)uracil with 3,4-dihydroxy-2-butanone 4-phosphate. This is the penultimate step in the biosynthesis of riboflavin. This chain is 6,7-dimethyl-8-ribityllumazine synthase, found in Bacillus anthracis (strain A0248).